A 251-amino-acid chain; its full sequence is Zinc import ATP-binding protein ZnuC (251 aa).

Residues 5–220 (VSLENVSVSF…PEFISMFGPR (216 aa)) enclose the ABC transporter domain. 37 to 44 (GPNGAGKS) contributes to the ATP binding site.

This sequence belongs to the ABC transporter superfamily. Zinc importer (TC 3.A.1.15.5) family. As to quaternary structure, the complex is composed of two ATP-binding proteins (ZnuC), two transmembrane proteins (ZnuB) and a solute-binding protein (ZnuA).

It is found in the cell inner membrane. The catalysed reaction is Zn(2+)(out) + ATP(in) + H2O(in) = Zn(2+)(in) + ADP(in) + phosphate(in) + H(+)(in). Functionally, part of the ABC transporter complex ZnuABC involved in zinc import. Responsible for energy coupling to the transport system. In Salmonella typhi, this protein is Zinc import ATP-binding protein ZnuC.